The sequence spans 221 residues: Translation initiation factor 6 (221 aa).

This sequence belongs to the eIF-6 family.

Its function is as follows. Binds to the 50S ribosomal subunit and prevents its association with the 30S ribosomal subunit to form the 70S initiation complex. This chain is Translation initiation factor 6, found in Methanopyrus kandleri (strain AV19 / DSM 6324 / JCM 9639 / NBRC 100938).